A 201-amino-acid chain; its full sequence is Thioredoxin reductase-like selenoprotein T (201 aa).

The signal sequence occupies residues 1 to 26 (MARSSGPLCLLLLGGLVAGILSGASA). Residues 51 to 54 (CVSU) constitute a cross-link (cysteinyl-selenocysteine (Cys-Sec)). Selenocysteine 54 is a non-standard amino acid (selenocysteine). The chain crosses the membrane as a helical span at residues 96 to 116 (VFKLVLIGLIIAGKDPFAFFG).

This sequence belongs to the SelWTH family. Selenoprotein T subfamily. May contain a selenide-sulfide bond between Cys-51 and Sec-54. This bond is speculated to serve as redox-active pair.

The protein resides in the endoplasmic reticulum membrane. The catalysed reaction is [thioredoxin]-dithiol + NADP(+) = [thioredoxin]-disulfide + NADPH + H(+). Functionally, selenoprotein with thioredoxin reductase-like oxidoreductase activity. This Xenopus tropicalis (Western clawed frog) protein is Thioredoxin reductase-like selenoprotein T (selenot).